Reading from the N-terminus, the 299-residue chain is tRNA dimethylallyltransferase (299 aa).

Position 11-18 (11-18 (GPTGSGKS)) interacts with ATP. 13-18 (TGSGKS) lines the substrate pocket.

This sequence belongs to the IPP transferase family. Monomer. Mg(2+) serves as cofactor.

It catalyses the reaction adenosine(37) in tRNA + dimethylallyl diphosphate = N(6)-dimethylallyladenosine(37) in tRNA + diphosphate. Catalyzes the transfer of a dimethylallyl group onto the adenine at position 37 in tRNAs that read codons beginning with uridine, leading to the formation of N6-(dimethylallyl)adenosine (i(6)A). This Pseudarthrobacter chlorophenolicus (strain ATCC 700700 / DSM 12829 / CIP 107037 / JCM 12360 / KCTC 9906 / NCIMB 13794 / A6) (Arthrobacter chlorophenolicus) protein is tRNA dimethylallyltransferase.